A 511-amino-acid polypeptide reads, in one-letter code: Light-independent protochlorophyllide reductase subunit B (511 aa).

Position 36 (Asp36) interacts with [4Fe-4S] cluster. Asp299 (proton donor) is an active-site residue. 434–435 (GM) contributes to the substrate binding site.

The protein belongs to the ChlB/BchB/BchZ family. As to quaternary structure, protochlorophyllide reductase is composed of three subunits; ChlL, ChlN and ChlB. Forms a heterotetramer of two ChlB and two ChlN subunits. [4Fe-4S] cluster is required as a cofactor.

Its subcellular location is the plastid. The protein localises to the chloroplast. It carries out the reaction chlorophyllide a + oxidized 2[4Fe-4S]-[ferredoxin] + 2 ADP + 2 phosphate = protochlorophyllide a + reduced 2[4Fe-4S]-[ferredoxin] + 2 ATP + 2 H2O. It participates in porphyrin-containing compound metabolism; chlorophyll biosynthesis (light-independent). In terms of biological role, component of the dark-operative protochlorophyllide reductase (DPOR) that uses Mg-ATP and reduced ferredoxin to reduce ring D of protochlorophyllide (Pchlide) to form chlorophyllide a (Chlide). This reaction is light-independent. The NB-protein (ChlN-ChlB) is the catalytic component of the complex. The sequence is that of Light-independent protochlorophyllide reductase subunit B from Huperzia lucidula (Shining clubmoss).